The primary structure comprises 232 residues: Large ribosomal subunit protein uL1 (232 aa).

Belongs to the universal ribosomal protein uL1 family. Part of the 50S ribosomal subunit.

Its function is as follows. Binds directly to 23S rRNA. The L1 stalk is quite mobile in the ribosome, and is involved in E site tRNA release. Protein L1 is also a translational repressor protein, it controls the translation of the L11 operon by binding to its mRNA. This chain is Large ribosomal subunit protein uL1, found in Chlamydia abortus (strain DSM 27085 / S26/3) (Chlamydophila abortus).